The following is a 347-amino-acid chain: Protein-glutamate methylesterase/protein-glutamine glutaminase 4 (347 aa).

In terms of domain architecture, Response regulatory spans 3-121 (KVLIVDDSAS…HPNHEREARS (119 aa)). D54 carries the 4-aspartylphosphate modification. Positions 157 to 342 (PARLKAVAIG…PDRIVTALTS (186 aa)) constitute a CheB-type methylesterase domain. Residues S168, H195, and D289 contribute to the active site.

It belongs to the CheB family. Post-translationally, phosphorylated by CheA. Phosphorylation of the N-terminal regulatory domain activates the methylesterase activity.

The protein localises to the cytoplasm. The catalysed reaction is [protein]-L-glutamate 5-O-methyl ester + H2O = L-glutamyl-[protein] + methanol + H(+). It catalyses the reaction L-glutaminyl-[protein] + H2O = L-glutamyl-[protein] + NH4(+). Functionally, involved in chemotaxis. Part of a chemotaxis signal transduction system that modulates chemotaxis in response to various stimuli. Catalyzes the demethylation of specific methylglutamate residues introduced into the chemoreceptors (methyl-accepting chemotaxis proteins or MCP) by CheR. Also mediates the irreversible deamidation of specific glutamine residues to glutamic acid. This chain is Protein-glutamate methylesterase/protein-glutamine glutaminase 4, found in Geobacter metallireducens (strain ATCC 53774 / DSM 7210 / GS-15).